The following is a 380-amino-acid chain: Glutamyl-tRNA reductase 1 (380 aa).

Substrate is bound by residues 42–45 (TCNR), Ser93, 98–100 (ETD), and Gln104. Catalysis depends on Cys43, which acts as the Nucleophile. Residue 172 to 177 (GAGAVG) coordinates NADP(+).

This sequence belongs to the glutamyl-tRNA reductase family. As to quaternary structure, homodimer.

The enzyme catalyses (S)-4-amino-5-oxopentanoate + tRNA(Glu) + NADP(+) = L-glutamyl-tRNA(Glu) + NADPH + H(+). It participates in porphyrin-containing compound metabolism; protoporphyrin-IX biosynthesis; 5-aminolevulinate from L-glutamyl-tRNA(Glu): step 1/2. Functionally, catalyzes the NADPH-dependent reduction of glutamyl-tRNA(Glu) to glutamate 1-semialdehyde (GSA). This is Glutamyl-tRNA reductase 1 from Pyrobaculum calidifontis (strain DSM 21063 / JCM 11548 / VA1).